Here is a 171-residue protein sequence, read N- to C-terminus: Protein-export protein SecB (171 aa).

The protein belongs to the SecB family. As to quaternary structure, homotetramer, a dimer of dimers. One homotetramer interacts with 1 SecA dimer.

The protein localises to the cytoplasm. One of the proteins required for the normal export of preproteins out of the cell cytoplasm. It is a molecular chaperone that binds to a subset of precursor proteins, maintaining them in a translocation-competent state. It also specifically binds to its receptor SecA. The sequence is that of Protein-export protein SecB from Jannaschia sp. (strain CCS1).